The sequence spans 274 residues: MQQLQNIIETAFERRAEITPANADTVTREAVNQVIALLDSGALRVAEKIDGQWVTHQWLKKAVLLSFRINDNQVIEGAESRYFDKVPMKFADYDEARFQKEGFRVVPPAAVRQGAFIARNTVLMPSYVNIGAYVDEGTMVDTWATVGSCAQIGKNVHLSGGVGIGGVLEPLQANPTIIEDNCFIGARSEVVEGVIVEEGSVISMGVYIGQSTRIYDRETGEIHYGRVPAGSVVVSGNLPSKDGKYSLYCAVIVKKVDAKTRGKVGINELLRTID.

Positions 104 and 141 each coordinate substrate.

The protein belongs to the transferase hexapeptide repeat family. In terms of assembly, homotrimer.

The protein localises to the cytoplasm. It carries out the reaction (S)-2,3,4,5-tetrahydrodipicolinate + succinyl-CoA + H2O = (S)-2-succinylamino-6-oxoheptanedioate + CoA. The protein operates within amino-acid biosynthesis; L-lysine biosynthesis via DAP pathway; LL-2,6-diaminopimelate from (S)-tetrahydrodipicolinate (succinylase route): step 1/3. The chain is 2,3,4,5-tetrahydropyridine-2,6-dicarboxylate N-succinyltransferase from Escherichia coli O139:H28 (strain E24377A / ETEC).